A 315-amino-acid polypeptide reads, in one-letter code: Homoserine kinase (315 aa).

96-106 (PHSRGLGSSAA) serves as a coordination point for ATP.

Belongs to the GHMP kinase family. Homoserine kinase subfamily.

The protein resides in the cytoplasm. It catalyses the reaction L-homoserine + ATP = O-phospho-L-homoserine + ADP + H(+). It functions in the pathway amino-acid biosynthesis; L-threonine biosynthesis; L-threonine from L-aspartate: step 4/5. Catalyzes the ATP-dependent phosphorylation of L-homoserine to L-homoserine phosphate. In Mycobacterium leprae (strain Br4923), this protein is Homoserine kinase.